Consider the following 416-residue polypeptide: Vacuole membrane protein KMS2 (416 aa).

N-acetylglycine is present on Gly2. At 2–59 (GYGNRASSKTPAISGLREKHQQDLEKLTLTSQPFKTLRLFVVAVFLYVRRWSSYLLAN) the chain is on the cytoplasmic side. The helical transmembrane segment at 60–80 (VGWLILFCSIFVAFAALLVTL) threads the bilayer. The Lumenal portion of the chain corresponds to 81 to 100 (DGPHVKHVEELSEYTRFGLW). Residues 101–123 (WIFLGVASSIGLGSGLHTFVLYL) traverse the membrane as a helical segment. Residues 124–249 (GPHIALFTIK…WLLSHSQYLN (126 aa)) lie on the Cytoplasmic side of the membrane. A helical transmembrane segment spans residues 250 to 270 (FFTILILASVPNPLFDLAGIM). Residues 271–281 (CGQFEKPFWEF) are Lumenal-facing. Residues 282 to 304 (FLATLIGKAIIKTHIQTVFIICV) form a helical membrane-spanning segment. Topologically, residues 305–315 (CNNQLLDWVEN) are cytoplasmic. Residues 316 to 336 (ELIYILSFVPGFASALPELTA) traverse the membrane as a helical segment. Topologically, residues 337-364 (KLRLMKEKYLIASPPVSSDINVKKWDLS) are lumenal. Residues 365-385 (FASVWNGVVWLMLLNFFGQIV) form a helical membrane-spanning segment. Topologically, residues 386-416 (TSTAQRYLKKQQEEELDALTNKSSLTSKKSK) are cytoplasmic.

This sequence belongs to the VMP1 family.

The protein localises to the endoplasmic reticulum membrane. Involved in the early secretory pathway. Required for the correct export of secretory products from the endoplasmic reticulum (ER) and involved in the maintenance of ER integrity. This Arabidopsis thaliana (Mouse-ear cress) protein is Vacuole membrane protein KMS2.